The chain runs to 503 residues: Probable DNA ligase (503 aa).

Asp212 serves as a coordination point for ATP. Lys214 functions as the N6-AMP-lysine intermediate in the catalytic mechanism. Residues Arg219, Arg234, Glu263, Phe296, Arg368, and Lys374 each coordinate ATP.

This sequence belongs to the ATP-dependent DNA ligase family. The cofactor is Mg(2+).

The enzyme catalyses ATP + (deoxyribonucleotide)n-3'-hydroxyl + 5'-phospho-(deoxyribonucleotide)m = (deoxyribonucleotide)n+m + AMP + diphosphate.. In terms of biological role, DNA ligase that seals nicks in double-stranded DNA during DNA replication, DNA recombination and DNA repair. The polypeptide is Probable DNA ligase (Kineococcus radiotolerans (strain ATCC BAA-149 / DSM 14245 / SRS30216)).